We begin with the raw amino-acid sequence, 342 residues long: L-threonine 3-dehydrogenase (342 aa).

Cys38 serves as a coordination point for Zn(2+). Active-site charge relay system residues include Thr40 and His43. Zn(2+) contacts are provided by His63, Glu64, Cys93, Cys96, Cys99, and Cys107. Residues Val175, Asp195, Arg200, Leu262–Ile264, and Ile286–Tyr287 contribute to the NAD(+) site.

The protein belongs to the zinc-containing alcohol dehydrogenase family. As to quaternary structure, homotetramer. Zn(2+) is required as a cofactor.

Its subcellular location is the cytoplasm. It carries out the reaction L-threonine + NAD(+) = (2S)-2-amino-3-oxobutanoate + NADH + H(+). It functions in the pathway amino-acid degradation; L-threonine degradation via oxydo-reductase pathway; glycine from L-threonine: step 1/2. Catalyzes the NAD(+)-dependent oxidation of L-threonine to 2-amino-3-ketobutyrate. This is L-threonine 3-dehydrogenase from Coxiella burnetii (strain Dugway 5J108-111).